The chain runs to 137 residues: Small ribosomal subunit protein uS12 (137 aa).

Aspartate 102 is modified (3-methylthioaspartic acid).

It belongs to the universal ribosomal protein uS12 family. In terms of assembly, part of the 30S ribosomal subunit. Contacts proteins S8 and S17. May interact with IF1 in the 30S initiation complex.

In terms of biological role, with S4 and S5 plays an important role in translational accuracy. Functionally, interacts with and stabilizes bases of the 16S rRNA that are involved in tRNA selection in the A site and with the mRNA backbone. Located at the interface of the 30S and 50S subunits, it traverses the body of the 30S subunit contacting proteins on the other side and probably holding the rRNA structure together. The combined cluster of proteins S8, S12 and S17 appears to hold together the shoulder and platform of the 30S subunit. This chain is Small ribosomal subunit protein uS12, found in Mycoplasmopsis agalactiae (strain NCTC 10123 / CIP 59.7 / PG2) (Mycoplasma agalactiae).